The sequence spans 339 residues: Anthranilate phosphoribosyltransferase (339 aa).

5-phospho-alpha-D-ribose 1-diphosphate contacts are provided by residues Gly-81, 84-85 (GD), Thr-89, 91-94 (NIST), 109-117 (KHGNRNLSS), and Thr-121. Residue Gly-81 participates in anthranilate binding. Position 93 (Ser-93) interacts with Mg(2+). Asn-112 provides a ligand contact to anthranilate. Residue Arg-167 coordinates anthranilate. Mg(2+) is bound by residues Asp-226 and Glu-227.

This sequence belongs to the anthranilate phosphoribosyltransferase family. Homodimer. It depends on Mg(2+) as a cofactor.

The catalysed reaction is N-(5-phospho-beta-D-ribosyl)anthranilate + diphosphate = 5-phospho-alpha-D-ribose 1-diphosphate + anthranilate. It participates in amino-acid biosynthesis; L-tryptophan biosynthesis; L-tryptophan from chorismate: step 2/5. Its function is as follows. Catalyzes the transfer of the phosphoribosyl group of 5-phosphorylribose-1-pyrophosphate (PRPP) to anthranilate to yield N-(5'-phosphoribosyl)-anthranilate (PRA). This is Anthranilate phosphoribosyltransferase from Ruegeria pomeroyi (strain ATCC 700808 / DSM 15171 / DSS-3) (Silicibacter pomeroyi).